A 142-amino-acid polypeptide reads, in one-letter code: Hemoglobin subunit alpha (142 aa).

N-acetylserine is present on serine 1. Residues 1-142 enclose the Globin domain; that stretch reads SLSDKDKNTV…LALALSERYR (142 aa). An O2-binding site is contributed by histidine 59. A heme b-binding site is contributed by histidine 88.

The protein belongs to the globin family. In terms of assembly, heterotetramer of two alpha chains and two beta chains. Can form polymers. As to expression, red blood cells.

Involved in oxygen transport from gills to the various peripheral tissues. This is Hemoglobin subunit alpha (hba) from Chelidonichthys kumu (Bluefin gurnard).